Consider the following 260-residue polypeptide: tRNA pseudouridine synthase B (260 aa).

Histidine 44 contacts substrate. Aspartate 49 acts as the Nucleophile in catalysis. Substrate contacts are provided by tyrosine 77, tyrosine 180, and leucine 201.

Belongs to the pseudouridine synthase TruB family. Type 1 subfamily.

It catalyses the reaction uridine(55) in tRNA = pseudouridine(55) in tRNA. Its function is as follows. Responsible for synthesis of pseudouridine from uracil-55 in the psi GC loop of transfer RNAs. The protein is tRNA pseudouridine synthase B of Blochmanniella pennsylvanica (strain BPEN).